The chain runs to 212 residues: Protein FAM177A1 (212 aa).

M1 carries the post-translational modification N-acetylmethionine. Residues 1–11 (MEGEPASREEG) are compositionally biased toward basic and acidic residues. The interval 1 to 33 (MEGEPASREEGEAVNASGAAAASAFRESAQQMS) is disordered. The segment covering 13 to 29 (AVNASGAAAASAFRESA) has biased composition (low complexity). S69 is subject to Phosphoserine. T70 is modified (phosphothreonine). A coiled-coil region spans residues 135–172 (IDEYYRMKKEEEEEEEENRMSEEAERQYQQNKLQADSV). Positions 146-179 (EEEEEENRMSEEAERQYQQNKLQADSVVQSDQPE) are disordered. Over residues 161–179 (QYQQNKLQADSVVQSDQPE) the composition is skewed to polar residues.

This sequence belongs to the FAM177 family.

This Bos taurus (Bovine) protein is Protein FAM177A1 (FAM177A1).